The primary structure comprises 159 residues: Ribosomal RNA large subunit methyltransferase H (159 aa).

Residues Leu76, Gly108, and 127 to 132 contribute to the S-adenosyl-L-methionine site; that span reads FGRMTL.

It belongs to the RNA methyltransferase RlmH family. Homodimer.

Its subcellular location is the cytoplasm. The catalysed reaction is pseudouridine(1915) in 23S rRNA + S-adenosyl-L-methionine = N(3)-methylpseudouridine(1915) in 23S rRNA + S-adenosyl-L-homocysteine + H(+). Functionally, specifically methylates the pseudouridine at position 1915 (m3Psi1915) in 23S rRNA. The chain is Ribosomal RNA large subunit methyltransferase H from Lactococcus lactis subsp. cremoris (strain SK11).